The primary structure comprises 115 residues: Meiotically up-regulated gene 42 protein (115 aa).

Functionally, has a role in meiosis. The protein is Meiotically up-regulated gene 42 protein (mug42) of Schizosaccharomyces pombe (strain 972 / ATCC 24843) (Fission yeast).